An 86-amino-acid polypeptide reads, in one-letter code: Neurotoxin LmNaTx17 (86 aa).

A signal peptide spans 1–18; that stretch reads MKILFVIVLAAFFIGVHC. The 67-residue stretch at 19 to 85 folds into the LCN-type CS-alpha/beta domain; that stretch reads KHGYPVQYSG…TWDYKTGKCR (67 aa). 4 cysteine pairs are disulfide-bonded: cysteine 33–cysteine 84, cysteine 37–cysteine 58, cysteine 44–cysteine 65, and cysteine 48–cysteine 67.

It belongs to the long (4 C-C) scorpion toxin superfamily. Sodium channel inhibitor family. Beta subfamily. As to expression, expressed by the venom gland.

The protein resides in the secreted. Functionally, binds voltage-independently at site-4 of sodium channels (Nav) and shift the voltage of activation toward more negative potentials thereby affecting sodium channel activation and promoting spontaneous and repetitive firing. The protein is Neurotoxin LmNaTx17 of Lychas mucronatus (Chinese swimming scorpion).